Reading from the N-terminus, the 398-residue chain is Riboflavin biosynthesis protein RibBA (398 aa).

The tract at residues 1 to 199 (MFHPIEEALE…IKDLIEYRYN (199 aa)) is DHBP synthase. D-ribulose 5-phosphate is bound by residues 26-27 (RE), Asp31, 138-142 (RAGHT), and Glu162. Glu27 serves as a coordination point for Mg(2+). His141 is a binding site for Mg(2+). The GTP cyclohydrolase II stretch occupies residues 200 to 398 (ITTLVNREVD…MKKLGHLLHF (199 aa)). GTP is bound at residue 251-255 (RVHSE). Zn(2+)-binding residues include Cys256, Cys267, and Cys269. GTP-binding positions include Gln272, 294 to 296 (EGR), and Thr316. Residue Asp328 is the Proton acceptor; for GTP cyclohydrolase activity of the active site. Arg330 acts as the Nucleophile; for GTP cyclohydrolase activity in catalysis. GTP-binding residues include Thr351 and Lys356.

This sequence in the N-terminal section; belongs to the DHBP synthase family. The protein in the C-terminal section; belongs to the GTP cyclohydrolase II family. Mg(2+) is required as a cofactor. The cofactor is Mn(2+). Zn(2+) serves as cofactor.

The catalysed reaction is D-ribulose 5-phosphate = (2S)-2-hydroxy-3-oxobutyl phosphate + formate + H(+). It catalyses the reaction GTP + 4 H2O = 2,5-diamino-6-hydroxy-4-(5-phosphoribosylamino)-pyrimidine + formate + 2 phosphate + 3 H(+). Its pathway is cofactor biosynthesis; riboflavin biosynthesis; 2-hydroxy-3-oxobutyl phosphate from D-ribulose 5-phosphate: step 1/1. It participates in cofactor biosynthesis; riboflavin biosynthesis; 5-amino-6-(D-ribitylamino)uracil from GTP: step 1/4. Functionally, catalyzes the conversion of D-ribulose 5-phosphate to formate and 3,4-dihydroxy-2-butanone 4-phosphate. Catalyzes the conversion of GTP to 2,5-diamino-6-ribosylamino-4(3H)-pyrimidinone 5'-phosphate (DARP), formate and pyrophosphate. The sequence is that of Riboflavin biosynthesis protein RibBA from Bacillus velezensis (strain DSM 23117 / BGSC 10A6 / LMG 26770 / FZB42) (Bacillus amyloliquefaciens subsp. plantarum).